The primary structure comprises 607 residues: Elongation factor 4 (607 aa).

One can recognise a tr-type G domain in the interval 11–193 (SKIRNFSIIA…QIVEKVPAPT (183 aa)). GTP-binding positions include 23-28 (DHGKST) and 140-143 (NKID).

It belongs to the TRAFAC class translation factor GTPase superfamily. Classic translation factor GTPase family. LepA subfamily.

It localises to the cell membrane. It catalyses the reaction GTP + H2O = GDP + phosphate + H(+). Functionally, required for accurate and efficient protein synthesis under certain stress conditions. May act as a fidelity factor of the translation reaction, by catalyzing a one-codon backward translocation of tRNAs on improperly translocated ribosomes. Back-translocation proceeds from a post-translocation (POST) complex to a pre-translocation (PRE) complex, thus giving elongation factor G a second chance to translocate the tRNAs correctly. Binds to ribosomes in a GTP-dependent manner. The sequence is that of Elongation factor 4 from Bacillus anthracis (strain A0248).